A 267-amino-acid chain; its full sequence is Orotidine 5'-phosphate decarboxylase (267 aa).

Substrate contacts are provided by residues D40, 62-64 (KTH), 93-102 (DRKFADIGNT), Y215, and R234. Residue K95 is the Proton donor of the active site.

The protein belongs to the OMP decarboxylase family.

The enzyme catalyses orotidine 5'-phosphate + H(+) = UMP + CO2. It participates in pyrimidine metabolism; UMP biosynthesis via de novo pathway; UMP from orotate: step 2/2. The protein is Orotidine 5'-phosphate decarboxylase (pyrG) of Phycomyces blakesleeanus (strain ATCC 8743b / DSM 1359 / FGSC 10004 / NBRC 33097 / NRRL 1555).